The sequence spans 230 residues: Phosphoribosylaminoimidazole-succinocarboxamide synthase (230 aa).

The protein belongs to the SAICAR synthetase family.

It carries out the reaction 5-amino-1-(5-phospho-D-ribosyl)imidazole-4-carboxylate + L-aspartate + ATP = (2S)-2-[5-amino-1-(5-phospho-beta-D-ribosyl)imidazole-4-carboxamido]succinate + ADP + phosphate + 2 H(+). It functions in the pathway purine metabolism; IMP biosynthesis via de novo pathway; 5-amino-1-(5-phospho-D-ribosyl)imidazole-4-carboxamide from 5-amino-1-(5-phospho-D-ribosyl)imidazole-4-carboxylate: step 1/2. The sequence is that of Phosphoribosylaminoimidazole-succinocarboxamide synthase from Thermotoga petrophila (strain ATCC BAA-488 / DSM 13995 / JCM 10881 / RKU-1).